The following is a 289-amino-acid chain: ATP synthase gamma chain (289 aa).

This sequence belongs to the ATPase gamma chain family. As to quaternary structure, F-type ATPases have 2 components, CF(1) - the catalytic core - and CF(0) - the membrane proton channel. CF(1) has five subunits: alpha(3), beta(3), gamma(1), delta(1), epsilon(1). CF(0) has three main subunits: a, b and c.

Its subcellular location is the cell inner membrane. Produces ATP from ADP in the presence of a proton gradient across the membrane. The gamma chain is believed to be important in regulating ATPase activity and the flow of protons through the CF(0) complex. This is ATP synthase gamma chain from Nitrosococcus oceani (strain ATCC 19707 / BCRC 17464 / JCM 30415 / NCIMB 11848 / C-107).